The primary structure comprises 225 residues: Peptidyl-prolyl cis-trans isomerase D (225 aa).

A signal peptide spans 1–22 (MKLQFFSFITLFACLFTTAIFA). Positions 37–195 (YFDINHGDKQ…KEVIIVESGE (159 aa)) constitute a PPIase cyclophilin-type domain. N-linked (GlcNAc...) asparagine glycosylation occurs at Asn-139. The Prevents secretion from ER motif lies at 222–225 (HDEL).

Belongs to the cyclophilin-type PPIase family. PPIase B subfamily.

The protein resides in the endoplasmic reticulum lumen. It catalyses the reaction [protein]-peptidylproline (omega=180) = [protein]-peptidylproline (omega=0). Functionally, PPIases accelerate the folding of proteins. It catalyzes the cis-trans isomerization of proline imidic peptide bonds in oligopeptides. This chain is Peptidyl-prolyl cis-trans isomerase D, found in Saccharomyces cerevisiae (strain ATCC 204508 / S288c) (Baker's yeast).